A 108-amino-acid polypeptide reads, in one-letter code: Nucleoid-associated protein BARBAKC583_1239 (108 aa).

The protein belongs to the YbaB/EbfC family. As to quaternary structure, homodimer.

It localises to the cytoplasm. The protein localises to the nucleoid. Binds to DNA and alters its conformation. May be involved in regulation of gene expression, nucleoid organization and DNA protection. The polypeptide is Nucleoid-associated protein BARBAKC583_1239 (Bartonella bacilliformis (strain ATCC 35685 / KC583 / Herrer 020/F12,63)).